A 477-amino-acid polypeptide reads, in one-letter code: Probable glycine dehydrogenase (decarboxylating) subunit 2 (477 aa).

Lys264 carries the N6-(pyridoxal phosphate)lysine modification.

Belongs to the GcvP family. C-terminal subunit subfamily. As to quaternary structure, the glycine cleavage system is composed of four proteins: P, T, L and H. In this organism, the P 'protein' is a heterodimer of two subunits. Pyridoxal 5'-phosphate is required as a cofactor.

The catalysed reaction is N(6)-[(R)-lipoyl]-L-lysyl-[glycine-cleavage complex H protein] + glycine + H(+) = N(6)-[(R)-S(8)-aminomethyldihydrolipoyl]-L-lysyl-[glycine-cleavage complex H protein] + CO2. The glycine cleavage system catalyzes the degradation of glycine. The P protein binds the alpha-amino group of glycine through its pyridoxal phosphate cofactor; CO(2) is released and the remaining methylamine moiety is then transferred to the lipoamide cofactor of the H protein. The sequence is that of Probable glycine dehydrogenase (decarboxylating) subunit 2 from Fervidobacterium nodosum (strain ATCC 35602 / DSM 5306 / Rt17-B1).